We begin with the raw amino-acid sequence, 871 residues long: Envelope glycoprotein gp160 (871 aa).

A signal peptide spans 1–21 (MKNLIGITLILIITILGIGFS). The Extracellular portion of the chain corresponds to 22 to 684 (TYYTTVFYGV…DITQWLWYIK (663 aa)). Cysteines 43 and 63 form a disulfide. Residues Asn-77, Asn-124, Asn-127, Asn-142, Asn-153, Asn-157, Asn-185, Asn-194, Asn-229, Asn-238, Asn-259, Asn-273, Asn-285, Asn-289, Asn-297, Asn-329, Asn-345, Asn-352, Asn-384, Asn-387, Asn-395, Asn-398, Asn-438, Asn-451, and Asn-496 are each glycosylated (N-linked (GlcNAc...) asparagine; by host). 5 disulfide bridges follow: Cys-108/Cys-202, Cys-115/Cys-193, Cys-120/Cys-154, Cys-215/Cys-244, and Cys-225/Cys-236. The segment at 120–153 (CTMTNTTNKTLNSATTTLTPTVNLSSIPNYEVYN) is V1. Residues 154-193 (CSFNQTTEFRDKKKQIYSLFYREDIVKEDGNNNSYYLHNC) are V2. Residues 292 to 325 (CERTGNNTRGQVQIGPGMTFYNIENVVGDTRKAY) are V3. Cys-292 and Cys-326 form a disulfide bridge. Intrachain disulfides connect Cys-376/Cys-435 and Cys-383/Cys-408. Residues 383 to 408 (CNLTNWTNTWTANRTNNTHGTLVAPC) are V4. The V5 stretch occupies residues 451–458 (NNSYTPQF). A fusion peptide region spans residues 502 to 522 (RDVGIGLLFLGFLSAAGSTMG). The immunosuppression stretch occupies residues 567–583 (LQARMLAVEKYIRDQQL). N-linked (GlcNAc...) asparagine; by host glycosylation is found at Asn-602, Asn-613, Asn-626, and Asn-638. The stretch at 645 to 668 (SLLEKAQTQQEKNKQELLELDKWS) forms a coiled coil. The tract at residues 663 to 684 (ELDKWSSLWDWFDITQWLWYIK) is MPER; binding to GalCer. A helical membrane pass occupies residues 685-705 (IAIIIVAGLVGLRILMFIVNV). At 706 to 871 (VKQVRQGYTP…IRQGLELALN (166 aa)) the chain is on the cytoplasmic side. Residues 713–716 (YTPL) carry the YXXL motif; contains endocytosis signal motif.

The mature envelope protein (Env) consists of a homotrimer of non-covalently associated gp120-gp41 heterodimers. The resulting complex protrudes from the virus surface as a spike. Interacts with host CD4 and CCR5. Gp120 also interacts with the C-type lectins CD209/DC-SIGN and CLEC4M/DC-SIGNR (collectively referred to as DC-SIGN(R)). In terms of assembly, the mature envelope protein (Env) consists of a homotrimer of non-covalently associated gp120-gp41 heterodimers. The resulting complex protrudes from the virus surface as a spike. In terms of processing, specific enzymatic cleavages in vivo yield mature proteins. Envelope glycoproteins are synthesized as an inactive precursor that is heavily N-glycosylated and processed likely by host cell furin in the Golgi to yield the mature SU and TM proteins. The cleavage site between SU and TM requires the minimal sequence [KR]-X-[KR]-R.

It localises to the virion membrane. The protein resides in the host cell membrane. Its subcellular location is the host endosome membrane. In terms of biological role, the surface protein gp120 (SU) attaches the virus to the host lymphoid cell by binding to the primary receptor CD4. This interaction induces a structural rearrangement creating a high affinity binding site for a chemokine coreceptor like CCR5. This peculiar 2 stage receptor-interaction strategy allows gp120 to maintain the highly conserved coreceptor-binding site in a cryptic conformation, protected from neutralizing antibodies. These changes are transmitted to the transmembrane protein gp41 and are thought to activate its fusogenic potential by unmasking its fusion peptide. Surface protein gp120 (SU) may target the virus to gut-associated lymphoid tissue (GALT) by binding host ITGA4/ITGB7 (alpha-4/beta-7 integrins), a complex that mediates T-cell migration to the GALT. Interaction between gp120 and ITGA4/ITGB7 would allow the virus to enter GALT early in the infection, infecting and killing most of GALT's resting CD4+ T-cells. This T-cell depletion is believed to be the major insult to the host immune system leading to AIDS. Functionally, the surface protein gp120 is a ligand for CD209/DC-SIGN and CLEC4M/DC-SIGNR, which are respectively found on dendritic cells (DCs), and on endothelial cells of liver sinusoids and lymph node sinuses. These interactions allow capture of viral particles at mucosal surfaces by these cells and subsequent transmission to permissive cells. DCs are professional antigen presenting cells, critical for host immunity by inducing specific immune responses against a broad variety of pathogens. They act as sentinels in various tissues where they take up antigen, process it, and present it to T-cells following migration to lymphoid organs. SIV subverts the migration properties of dendritic cells to gain access to CD4+ T-cells in lymph nodes. Virus transmission to permissive T-cells occurs either in trans (without DCs infection, through viral capture and transmission), or in cis (following DCs productive infection, through the usual CD4-gp120 interaction), thereby inducing a robust infection. In trans infection, bound virions remain infectious over days and it is proposed that they are not degraded, but protected in non-lysosomal acidic organelles within the DCs close to the cell membrane thus contributing to the viral infectious potential during DCs' migration from the periphery to the lymphoid tissues. On arrival at lymphoid tissues, intact virions recycle back to DCs' cell surface allowing virus transmission to CD4+ T-cells. Virion capture also seems to lead to MHC-II-restricted viral antigen presentation, and probably to the activation of SIV-specific CD4+ cells. Its function is as follows. The transmembrane protein gp41 (TM) acts as a class I viral fusion protein. Under the current model, the protein has at least 3 conformational states: pre-fusion native state, pre-hairpin intermediate state, and post-fusion hairpin state. During fusion of viral and target intracellular membranes, the coiled coil regions (heptad repeats) assume a trimer-of-hairpins structure, positioning the fusion peptide in close proximity to the C-terminal region of the ectodomain. The formation of this structure appears to drive apposition and subsequent fusion of viral and target cell membranes. Complete fusion occurs in host cell endosomes. The virus undergoes clathrin-dependent internalization long before endosomal fusion, thus minimizing the surface exposure of conserved viral epitopes during fusion and reducing the efficacy of inhibitors targeting these epitopes. Membranes fusion leads to delivery of the nucleocapsid into the cytoplasm. In terms of biological role, the envelope glycoprotein gp160 precursor down-modulates cell surface CD4 antigen by interacting with it in the endoplasmic reticulum and blocking its transport to the cell surface. The gp120-gp41 heterodimer allows rapid transcytosis of the virus through CD4 negative cells such as simple epithelial monolayers of the intestinal, rectal and endocervical epithelial barriers. Both gp120 and gp41 specifically recognize glycosphingolipids galactosyl-ceramide (GalCer) or 3' sulfo-galactosyl-ceramide (GalS) present in the lipid rafts structures of epithelial cells. Binding to these alternative receptors allows the rapid transcytosis of the virus through the epithelial cells. This transcytotic vesicle-mediated transport of virions from the apical side to the basolateral side of the epithelial cells does not involve infection of the cells themselves. This chain is Envelope glycoprotein gp160, found in Simian immunodeficiency virus (isolate TAN1) (SIV-cpz).